We begin with the raw amino-acid sequence, 175 residues long: ATP synthase subunit b 2 (175 aa).

Residues 20-40 (LIFWTTITFVLVLIILKKIAW) traverse the membrane as a helical segment.

It belongs to the ATPase B chain family. As to quaternary structure, F-type ATPases have 2 components, F(1) - the catalytic core - and F(0) - the membrane proton channel. F(1) has five subunits: alpha(3), beta(3), gamma(1), delta(1), epsilon(1). F(0) has four main subunits: a(1), b(2) and c(10-14). The alpha and beta chains form an alternating ring which encloses part of the gamma chain. F(1) is attached to F(0) by a central stalk formed by the gamma and epsilon chains, while a peripheral stalk is formed by the delta and b chains.

The protein localises to the cell inner membrane. In terms of biological role, f(1)F(0) ATP synthase produces ATP from ADP in the presence of a proton or sodium gradient. F-type ATPases consist of two structural domains, F(1) containing the extramembraneous catalytic core and F(0) containing the membrane proton channel, linked together by a central stalk and a peripheral stalk. During catalysis, ATP synthesis in the catalytic domain of F(1) is coupled via a rotary mechanism of the central stalk subunits to proton translocation. Component of the F(0) channel, it forms part of the peripheral stalk, linking F(1) to F(0). The polypeptide is ATP synthase subunit b 2 (Chlorobium luteolum (strain DSM 273 / BCRC 81028 / 2530) (Pelodictyon luteolum)).